Here is a 68-residue protein sequence, read N- to C-terminus: Large ribosomal subunit protein uL29 (68 aa).

The protein belongs to the universal ribosomal protein uL29 family.

This Rhodospirillum rubrum (strain ATCC 11170 / ATH 1.1.1 / DSM 467 / LMG 4362 / NCIMB 8255 / S1) protein is Large ribosomal subunit protein uL29.